Consider the following 304-residue polypeptide: Bifunctional protein FolD (304 aa).

Residues 170–172 (GRS), Ser195, and Ile236 each bind NADP(+).

This sequence belongs to the tetrahydrofolate dehydrogenase/cyclohydrolase family. As to quaternary structure, homodimer.

It carries out the reaction (6R)-5,10-methylene-5,6,7,8-tetrahydrofolate + NADP(+) = (6R)-5,10-methenyltetrahydrofolate + NADPH. The catalysed reaction is (6R)-5,10-methenyltetrahydrofolate + H2O = (6R)-10-formyltetrahydrofolate + H(+). It functions in the pathway one-carbon metabolism; tetrahydrofolate interconversion. Functionally, catalyzes the oxidation of 5,10-methylenetetrahydrofolate to 5,10-methenyltetrahydrofolate and then the hydrolysis of 5,10-methenyltetrahydrofolate to 10-formyltetrahydrofolate. This chain is Bifunctional protein FolD, found in Anaplasma phagocytophilum (strain HZ).